The chain runs to 160 residues: Large ribosomal subunit protein uL30m (160 aa).

A mitochondrion-targeting transit peptide spans 1–34 (MAGVLRSVFQRPPGRLQTVKKGAESLIGTEWIRH). Residues 45-64 (VFQPRPEDHEKYGGDPQNPH) are disordered.

It belongs to the universal ribosomal protein uL30 family. As to quaternary structure, component of the mitochondrial ribosome large subunit (39S) which comprises a 16S rRNA and about 50 distinct proteins.

It is found in the mitochondrion. This is Large ribosomal subunit protein uL30m (Mrpl30) from Rattus norvegicus (Rat).